Consider the following 271-residue polypeptide: Type II restriction enzyme ScrFI (271 aa).

It carries out the reaction Endonucleolytic cleavage of DNA to give specific double-stranded fragments with terminal 5'-phosphates.. In terms of biological role, a P subtype restriction enzyme that recognizes the double-stranded sequence 5'-CCNGG-3' and cleaves after C-2. This is Type II restriction enzyme ScrFI from Lactococcus lactis subsp. cremoris (Streptococcus cremoris).